Consider the following 651-residue polypeptide: Apical membrane antigen 1-like protein (651 aa).

The signal sequence occupies residues 1–41; that stretch reads MPTESRSILARAEETRCRHLSRLLRAGLVFLLCDVLTSCLA. Positions 42-81 are cleaved as a propeptide — removed in mature form; that stretch reads TPELQNTVIRSSKAHHLQLLFSSRSTPAVKFPLDATLSAP. Residues 42-570 are Extracellular-facing; the sequence is TPELQNTVIR…VEKEGSGGNT (529 aa). Disulfide bonds link cysteine 141–cysteine 309, cysteine 215–cysteine 248, cysteine 264–cysteine 277, cysteine 327–cysteine 417, cysteine 347–cysteine 408, cysteine 441–cysteine 463, and cysteine 453–cysteine 475. The N-linked (GlcNAc...) asparagine glycan is linked to asparagine 230. Residues 483–486 form a 1; approximate repeat; the sequence is PPVK. Residues 483 to 531 form a 12 x 4 AA approximate tandem-repeats of P-P-V-E region; that stretch reads PPVKPPVEPPVEPPVEPPVEPPVEPPVEPPVEPPVEPPVEPPVVEPPTE. Residues 483 to 547 show a composition bias toward pro residues; the sequence is PPVKPPVEPP…EPPVVLPPTP (65 aa). The tract at residues 483–567 is disordered; sequence PPVKPPVEPP…DETVEKEGSG (85 aa). 9 tandem repeats follow at residues 487-490, 491-494, 495-498, 499-502, 503-506, 507-510, 511-514, 515-518, and 519-522. Residues 523–527 form an 11; approximate repeat; sequence PPVVE. One copy of the 12; approximate repeat lies at 528 to 531; that stretch reads PPTE. A helical transmembrane segment spans residues 571–591; that stretch reads ALIAGSVLGMLIILALVGTCV. At 592-651 the chain is on the cytoplasmic side; sequence GFYYRKRPLPPTERPTVEASGGREVEGPSDVAVPPDHSWWGEGEHETESLLGSRAVDAEF. A disordered region spans residues 598–651; it reads RPLPPTERPTVEASGGREVEGPSDVAVPPDHSWWGEGEHETESLLGSRAVDAEF.

The protein belongs to the apicomplexan parasites AMA1 family. Post-translationally, proteolytically cleaved within its transmembrane domain, releasing a soluble form from the cell surface.

It is found in the cell membrane. The protein resides in the secreted. May play a role in host cell invasion. This Toxoplasma gondii (strain ATCC 50861 / VEG) protein is Apical membrane antigen 1-like protein.